Consider the following 421-residue polypeptide: Imidazolonepropionase (421 aa).

Fe(3+) contacts are provided by His81 and His83. Zn(2+)-binding residues include His81 and His83. Residues Arg90, Tyr153, and His186 each contribute to the 4-imidazolone-5-propanoate site. Residue Tyr153 participates in N-formimidoyl-L-glutamate binding. His251 is a Fe(3+) binding site. His251 is a binding site for Zn(2+). Glu254 lines the 4-imidazolone-5-propanoate pocket. A Fe(3+)-binding site is contributed by Asp326. A Zn(2+)-binding site is contributed by Asp326. N-formimidoyl-L-glutamate contacts are provided by Asn328 and Gly330. Position 331 (Ser331) interacts with 4-imidazolone-5-propanoate.

The protein belongs to the metallo-dependent hydrolases superfamily. HutI family. Zn(2+) serves as cofactor. It depends on Fe(3+) as a cofactor.

Its subcellular location is the cytoplasm. The catalysed reaction is 4-imidazolone-5-propanoate + H2O = N-formimidoyl-L-glutamate. It participates in amino-acid degradation; L-histidine degradation into L-glutamate; N-formimidoyl-L-glutamate from L-histidine: step 3/3. Catalyzes the hydrolytic cleavage of the carbon-nitrogen bond in imidazolone-5-propanoate to yield N-formimidoyl-L-glutamate. It is the third step in the universal histidine degradation pathway. This Streptococcus gordonii (strain Challis / ATCC 35105 / BCRC 15272 / CH1 / DL1 / V288) protein is Imidazolonepropionase.